Here is a 1555-residue protein sequence, read N- to C-terminus: Phospholipid-transporting ATPase DNF1 (1555 aa).

The tract at residues 1–85 (MAPPQEEGGG…SSNNGGSAPR (85 aa)) is disordered. At 1–134 (MAPPQEEGGG…PKNLWFQFHN (134 aa)) the chain is on the cytoplasmic side. Basic residues predominate over residues 22-37 (WATRRLTVKSGARKRL). Over residues 72 to 82 (GSISSSNNGGS) the composition is skewed to low complexity. Residues 135–155 (IANIFFLFLVILVIFPIFGGV) traverse the membrane as a helical segment. Position 156 (N156) is a topological domain, extracellular. The helical transmembrane segment at 157 to 177 (PGLNSVPLIVIITVTAIKDAI) threads the bilayer. The Cytoplasmic segment spans residues 178–491 (EDYRRTILDI…ARIARELNFN (314 aa)). The segment at 257-288 (TRTAPWDPSHRRSVASHTEEIQMTPVPSPVPH) is disordered. The helical transmembrane segment at 492–512 (VICNFGILLIMCLIAAIANGI) threads the bilayer. Over 513–537 (AWGKTDASLAWFEYGSIGGTPALTG) the chain is Extracellular. A helical transmembrane segment spans residues 538–558 (FITFWAAVIVFQNLVPISLYI). Topologically, residues 559-1123 (SLEIVRTLQA…TISNFFYKNM (565 aa)) are cytoplasmic. The active-site 4-aspartylphosphate intermediate is D606. ATP is bound by residues D606, K607, T608, E740, F781, S783, K786, K804, R839, T840, T919, G920, D921, R1031, and K1037. D606 serves as a coordination point for Mg(2+). Mg(2+) is bound at residue T608. Position 1057 (D1057) interacts with Mg(2+). ATP is bound by residues N1060 and D1061. D1061 contributes to the Mg(2+) binding site. A helical membrane pass occupies residues 1124–1144 (IWTWSIFWYQCYCNFDIAYIF). Residues 1145–1146 (EY) are Extracellular-facing. The helical transmembrane segment at 1147–1167 (TYILMFNLFFTSVPVILMGVL) threads the bilayer. At 1168-1200 (DQDVSDTVSLAVPQLYRRGIERKEWTQTKFWLY) the chain is on the cytoplasmic side. A helical membrane pass occupies residues 1201 to 1221 (MIDGVYQSVMSFFIPFIFVVL). At 1222-1237 (TPTAAGNGLDVSERTR) the chain is on the extracellular side. Residues 1238 to 1258 (LGAYIAHPAVITINGYILINT) form a helical membrane-spanning segment. The Cytoplasmic segment spans residues 1259–1262 (YRWD). The chain crosses the membrane as a helical span at residues 1263–1283 (WLMLLSIVLSDVFIFFWTGVY). The Extracellular segment spans residues 1284 to 1302 (TATTYSAGFYQAAPQVYQE). Residues 1303–1323 (LTFWMCLIVTPALCLLPRLVV) form a helical membrane-spanning segment. Position 1320 (R1320) interacts with a 1,2-diacyl-sn-glycero-3-phospho-L-serine. At 1324–1555 (KCIQKQRFPY…EGEPPREPPM (232 aa)) the chain is on the cytoplasmic side. 2 disordered regions span residues 1364-1456 (VEGE…ERTR) and 1489-1555 (ESTH…EPPM). The segment covering 1406-1432 (ATHNTRAQNGSDGTTYIMQSRTSTELQ) has biased composition (polar residues). Basic and acidic residues-rich tracts occupy residues 1436 to 1456 (PFDR…ERTR) and 1540 to 1555 (KSID…EPPM).

It belongs to the cation transport ATPase (P-type) (TC 3.A.3) family. Type IV subfamily. Component of a flippase complex consisting of DNF1 and CDC50. Interacts with CDC50; the interaction is direct. Mg(2+) serves as cofactor.

Its subcellular location is the cell membrane. The protein localises to the endosome membrane. It localises to the golgi apparatus. The protein resides in the trans-Golgi network membrane. The catalysed reaction is ATP + H2O + phospholipidSide 1 = ADP + phosphate + phospholipidSide 2.. The enzyme catalyses a 1,2-diacyl-sn-glycero-3-phosphoethanolamine(out) + ATP + H2O = a 1,2-diacyl-sn-glycero-3-phosphoethanolamine(in) + ADP + phosphate + H(+). It carries out the reaction a 1,2-diacyl-sn-glycero-3-phosphocholine(out) + ATP + H2O = a 1,2-diacyl-sn-glycero-3-phosphocholine(in) + ADP + phosphate + H(+). It catalyses the reaction a beta-D-glucosyl-(1&lt;-&gt;1')-N-acylsphing-4-enine(out) + ATP + H2O = a beta-D-glucosyl-(1&lt;-&gt;1')-N-acylsphing-4-enine(in) + ADP + phosphate + H(+). The catalysed reaction is a 1,2-diacyl-sn-glycero-3-phospho-L-serine(out) + ATP + H2O = a 1,2-diacyl-sn-glycero-3-phospho-L-serine(in) + ADP + phosphate + H(+). Functionally, catalytic component of a P4-ATPase flippase complex which catalyzes the hydrolysis of ATP coupled to the transport of phosphatidylcholine and phosphatidylserine from the lumenal to the cytosolic leaflet of membranes and ensures the maintenance of asymmetric distribution of phospholipids. May also transport glucosylceramide and phosphatidylethanolamine. The polypeptide is Phospholipid-transporting ATPase DNF1 (Chaetomium thermophilum (strain DSM 1495 / CBS 144.50 / IMI 039719) (Thermochaetoides thermophila)).